We begin with the raw amino-acid sequence, 136 residues long: Large-conductance mechanosensitive channel (136 aa).

The next 2 membrane-spanning stretches (helical) occupy residues 9-29 (AFASRGNVIDMAVGIIIGAAF) and 79-99 (IQTIIDFTIIAFAIFMGVKAI).

It belongs to the MscL family. In terms of assembly, homopentamer.

The protein resides in the cell inner membrane. Its function is as follows. Channel that opens in response to stretch forces in the membrane lipid bilayer. May participate in the regulation of osmotic pressure changes within the cell. This is Large-conductance mechanosensitive channel from Shewanella baltica (strain OS223).